A 178-amino-acid polypeptide reads, in one-letter code: Caveolin-1 (178 aa).

Ser-2 is modified (N-acetylserine). Phosphoserine is present on Ser-2. Residues 2–94 (SGGKYVDSEG…WKASFTTFTV (93 aa)) are required for homooligomerization. The Cytoplasmic portion of the chain corresponds to 2-104 (SGGKYVDSEG…TKYWFYRLLS (103 aa)). Residue Lys-5 is modified to N6-acetyllysine; alternate. Lys-5 participates in a covalent cross-link: Glycyl lysine isopeptide (Lys-Gly) (interchain with G-Cter in ubiquitin); alternate. Phosphotyrosine is present on Tyr-6. A Phosphoserine modification is found at Ser-9. Tyr-14 carries the post-translational modification Phosphotyrosine; by ABL1. The residue at position 25 (Tyr-25) is a Phosphotyrosine. Glycyl lysine isopeptide (Lys-Gly) (interchain with G-Cter in ubiquitin) cross-links involve residues Lys-26 and Lys-30. A Phosphoserine modification is found at Ser-37. Residues Lys-39, Lys-47, and Lys-57 each participate in a glycyl lysine isopeptide (Lys-Gly) (interchain with G-Cter in ubiquitin) cross-link. Positions 82 to 94 (DGIWKASFTTFTV) are interaction with CAVIN3. An intramembrane region (helical) is located at residues 105 to 125 (ALFGIPMALVWGIYFAILSFL). The Cytoplasmic segment spans residues 126 to 178 (HIWAVVPCIKSFLIEIQCISRVYSIYVHTVCDPLFEAVGKIFSNVRINLQKEI). Residues 131-142 (VPCIKSFLIEIQ) are interacts with SPRY1, SPRY2, SPRY3 and SPRY4. Residues Cys-133, Cys-143, and Cys-156 are each lipidated (S-palmitoyl cysteine). Positions 149–160 (SIYVHTVCDPLF) are interacts with SPRY1, SPRY2, and SPRY4. The interacts with SPRY1, SPRY2, SPRY3 and SPRY4 stretch occupies residues 167-178 (FSNVRINLQKEI).

It belongs to the caveolin family. In terms of assembly, homooligomer. Interacts with GLIPR2. Interacts with NOSTRIN. Interacts with SNAP25 and STX1A. Interacts (via the N-terminus) with DPP4; the interaction is direct. Interacts with CTNNB1, CDH1 and JUP. Interacts with PACSIN2; this interaction induces membrane tubulation. Interacts with SLC7A9. Interacts with BMX and BTK. Interacts with TGFBR1. Interacts with CAVIN3 (via leucine-zipper domain) in a cholesterol-sensitive manner. Interacts with CAVIN1. Interacts with EHD2 in a cholesterol-dependent manner. Forms a ternary complex with UBXN6 and VCP; mediates CAV1 targeting to lysosomes for degradation. Interacts with ABCG1; this interaction regulates ABCG1-mediated cholesterol efflux. Interacts with NEU3; this interaction enhances NEU3 sialidase activity within caveola. Interacts (via C-terminus) with SPRY1, SPRY2 (via C-terminus), SPRY3, and SPRY4. Interacts with IGFBP5; this interaction allows trafficking of IGFBP5 from the plasma membrane to the nucleus. In terms of processing, phosphorylated at Tyr-14 by ABL1 in response to oxidative stress. Post-translationally, ubiquitinated. Undergo monoubiquitination and multi- and/or polyubiquitination. Monoubiquitination of N-terminal lysines promotes integration in a ternary complex with UBXN6 and VCP which promotes oligomeric CAV1 targeting to lysosomes for degradation. Ubiquitinated by ZNRF1; leading to degradation and modulation of the TLR4-mediated immune response.

The protein resides in the golgi apparatus membrane. The protein localises to the cell membrane. It localises to the membrane. Its subcellular location is the caveola. It is found in the membrane raft. May act as a scaffolding protein within caveolar membranes. Forms a stable heterooligomeric complex with CAV2 that targets to lipid rafts and drives caveolae formation. Mediates the recruitment of CAVIN proteins (CAVIN1/2/3/4) to the caveolae. Interacts directly with G-protein alpha subunits and can functionally regulate their activity. Involved in the costimulatory signal essential for T-cell receptor (TCR)-mediated T-cell activation. Its binding to DPP4 induces T-cell proliferation and NF-kappa-B activation in a T-cell receptor/CD3-dependent manner. Recruits CTNNB1 to caveolar membranes and may regulate CTNNB1-mediated signaling through the Wnt pathway. Negatively regulates TGFB1-mediated activation of SMAD2/3 by mediating the internalization of TGFBR1 from membrane rafts leading to its subsequent degradation. Binds 20(S)-hydroxycholesterol (20(S)-OHC). This Papio anubis (Olive baboon) protein is Caveolin-1 (CAV1).